Here is a 79-residue protein sequence, read N- to C-terminus: Small ribosomal subunit protein uS17 (79 aa).

The protein belongs to the universal ribosomal protein uS17 family. As to quaternary structure, part of the 30S ribosomal subunit.

Its function is as follows. One of the primary rRNA binding proteins, it binds specifically to the 5'-end of 16S ribosomal RNA. This is Small ribosomal subunit protein uS17 from Caulobacter sp. (strain K31).